Here is a 163-residue protein sequence, read N- to C-terminus: Augmin complex subunit wac (163 aa).

Residues 86–115 are a coiled coil; it reads ELQRILSSIEEATRDVVMLERFNAAAEERL.

In terms of assembly, component of the augmin complex composed of dgt2, dgt3, dgt4, dgt5, dgt6, msd1, msd5 and wac. The complex interacts directly or indirectly with microtubules and is required for centrosome-independent generation of spindle microtubules. wac interacts directly (via coiled coil) with dgt2. In adult females, detected only in the abdomen with no expression in the head or thorax (at protein level).

The protein resides in the cytoplasm. It localises to the cytoskeleton. It is found in the spindle. Its subcellular location is the spindle pole. As part of the augmin complex, plays a role in centrosome-independent generation of spindle microtubules. The complex is required for mitotic spindle assembly through its involvement in localizing gamma-tubulin to spindle microtubules. wac is dispensable for somatic mitosis and for assembly of spindle microtubules in oocytes during female meiosis but is required during female meiosis for chromosome alignment and segregation. It is required for microtubule assembly near spindle poles in oocytes. It is also required for acentrosomal microtubule nucleation and meiotic spindle formation during male meiosis. wac binds to microtubules in vitro. The chain is Augmin complex subunit wac from Drosophila melanogaster (Fruit fly).